The primary structure comprises 103 residues: UPF0122 protein FN1394 (103 aa).

This sequence belongs to the UPF0122 family.

Its function is as follows. Might take part in the signal recognition particle (SRP) pathway. This is inferred from the conservation of its genetic proximity to ftsY/ffh. May be a regulatory protein. In Fusobacterium nucleatum subsp. nucleatum (strain ATCC 25586 / DSM 15643 / BCRC 10681 / CIP 101130 / JCM 8532 / KCTC 2640 / LMG 13131 / VPI 4355), this protein is UPF0122 protein FN1394.